The primary structure comprises 224 residues: Cytosolic-abundant heat soluble protein 77580 (224 aa).

Over residues 1–13 the composition is skewed to low complexity; that stretch reads MSNYQQESSYQYS. Residues 1–38 are disordered; sequence MSNYQQESSYQYSDRSNNGQQQEQQEKKEVEHSSYTHT. Residues 24-38 show a composition bias toward basic and acidic residues; that stretch reads QQEKKEVEHSSYTHT. A coiled-coil region spans residues 83–191; the sequence is VIDTEAETEE…KRVLERSKFH (109 aa). 2 CAHS motif regions span residues 122 to 140 and 159 to 177; these read YRKQ…LEKQ and QKRQ…LERE. Positions 200 to 215 are enriched in low complexity; it reads AAAGSTHSGSSSVAVS. The tract at residues 200-224 is disordered; that stretch reads AAAGSTHSGSSSVAVSESEKFQTNN.

The protein belongs to the Cytosolic-abundant heat soluble protein (CAHS) family.

The protein resides in the cytoplasm. CAHS proteins are cytosolic heat soluble proteins that seem to contribute to the anhydrobiosis in tardigrades, but their specific mechanisms are yet to be identified. It is possible that protection during anhydrobiosis might occur via the stabilization of vitrifying small molecules such as sugars, but not via the direct glass transition of CAHS proteins themselves. This is Cytosolic-abundant heat soluble protein 77580 from Hypsibius exemplaris (Freshwater tardigrade).